The following is a 209-amino-acid chain: Small ribosomal subunit protein uS4 (209 aa).

One can recognise an S4 RNA-binding domain in the interval arginine 98–asparagine 164.

This sequence belongs to the universal ribosomal protein uS4 family. In terms of assembly, part of the 30S ribosomal subunit. Contacts protein S5. The interaction surface between S4 and S5 is involved in control of translational fidelity.

In terms of biological role, one of the primary rRNA binding proteins, it binds directly to 16S rRNA where it nucleates assembly of the body of the 30S subunit. Its function is as follows. With S5 and S12 plays an important role in translational accuracy. The protein is Small ribosomal subunit protein uS4 of Thermosipho melanesiensis (strain DSM 12029 / CIP 104789 / BI429).